We begin with the raw amino-acid sequence, 708 residues long: Fatty acid oxidation complex subunit alpha (708 aa).

The segment at Met1 to Pro190 is enoyl-CoA hydratase. Positions Gln310 to Ser708 are 3-hydroxyacyl-CoA dehydrogenase.

It in the N-terminal section; belongs to the enoyl-CoA hydratase/isomerase family. The protein in the central section; belongs to the 3-hydroxyacyl-CoA dehydrogenase family. In terms of assembly, heterotetramer of two alpha chains (FadJ) and two beta chains (FadI).

The protein localises to the cytoplasm. It catalyses the reaction a (3S)-3-hydroxyacyl-CoA = a (2E)-enoyl-CoA + H2O. It carries out the reaction a 4-saturated-(3S)-3-hydroxyacyl-CoA = a (3E)-enoyl-CoA + H2O. The catalysed reaction is a (3S)-3-hydroxyacyl-CoA + NAD(+) = a 3-oxoacyl-CoA + NADH + H(+). The enzyme catalyses (3S)-3-hydroxybutanoyl-CoA = (3R)-3-hydroxybutanoyl-CoA. It participates in lipid metabolism; fatty acid beta-oxidation. Its function is as follows. Catalyzes the formation of a hydroxyacyl-CoA by addition of water on enoyl-CoA. Also exhibits 3-hydroxyacyl-CoA epimerase and 3-hydroxyacyl-CoA dehydrogenase activities. The polypeptide is Fatty acid oxidation complex subunit alpha (Shewanella halifaxensis (strain HAW-EB4)).